Here is a 390-residue protein sequence, read N- to C-terminus: Neuromedin-B receptor (390 aa).

Over methionine 1 to cysteine 44 the chain is Extracellular. N-linked (GlcNAc...) asparagine glycans are attached at residues asparagine 8 and asparagine 16. Residues valine 45–valine 65 traverse the membrane as a helical segment. Topologically, residues lysine 66–serine 76 are cytoplasmic. A helical transmembrane segment spans residues valine 77 to valine 97. The Extracellular portion of the chain corresponds to proline 98–lysine 117. A disulfide bridge links cysteine 116 with cysteine 198. A helical membrane pass occupies residues leucine 118–serine 138. Topologically, residues alanine 139–glycine 155 are cytoplasmic. Residues alanine 156 to valine 176 traverse the membrane as a helical segment. The Extracellular segment spans residues proline 177 to lysine 210. Asparagine 192 carries N-linked (GlcNAc...) asparagine glycosylation. A helical membrane pass occupies residues isoleucine 211 to tyrosine 231. The Cytoplasmic segment spans residues tyrosine 232–lysine 266. Residues isoleucine 267 to methionine 287 traverse the membrane as a helical segment. The Extracellular segment spans residues tyrosine 288–valine 305. The chain crosses the membrane as a helical span at residues threonine 306–serine 328. Topologically, residues glutamate 329 to leucine 390 are cytoplasmic. Residue cysteine 341 is the site of S-palmitoyl cysteine attachment. Serine 352 carries the post-translational modification Phosphoserine.

It belongs to the G-protein coupled receptor 1 family. Highly expressed in peripheral tissues where it is detected in the respiratory system, circulatory system, digestive system, urogenital system, lymphatic organs and endocrine system (at protein level). In the testis, expressed mainly in Leydig cells (at protein level).

It is found in the cell membrane. Its function is as follows. Receptor for neuromedin-B. Contributes to the maintenance of basal sigh rate through signaling in the pre-Botzinger complex, a cluster of several thousand neurons in the ventrolateral medulla responsible for inspiration during respiratory activity. Contributes to the induction of sneezing following exposure to chemical irritants or allergens which causes release of NMB by nasal sensory neurons and activation of NMBR-expressing neurons in the sneeze-evoking region of the brainstem. These in turn activate neurons of the caudal ventral respiratory group, giving rise to the sneezing response. Contributes to induction of acute itch, possibly through its activation on dorsal root ganglion neurons by the NMB peptide. Plays a role in the innate immune response to influenza A virus infection by enhancing interferon alpha expression and reducing expression of IL6. Plays a role in CSF1-induced proliferation of osteoclast precursors by contributing to the positive regulation of the expression of the CSF1 receptor CSF1R. This chain is Neuromedin-B receptor (NMBR), found in Sus scrofa (Pig).